A 374-amino-acid chain; its full sequence is Chaperone protein DnaJ (374 aa).

The J domain maps to 4 to 68; it reads DYYDILGVSR…QMRGRYDQFG (65 aa). The CR-type zinc finger occupies 133 to 215; sequence GGEQQIRISH…CGGRGQNQVS (83 aa). The Zn(2+) site is built by Cys146, Cys149, Cys163, Cys166, Cys189, Cys192, Cys203, and Cys206. CXXCXGXG motif repeat units lie at residues 146–153, 163–170, 189–196, and 203–210; these read CKTCEGTG, CSTCQGSG, CPTCNGQG, and CDSCGGRG.

This sequence belongs to the DnaJ family. In terms of assembly, homodimer. Zn(2+) serves as cofactor.

The protein localises to the cytoplasm. Participates actively in the response to hyperosmotic and heat shock by preventing the aggregation of stress-denatured proteins and by disaggregating proteins, also in an autonomous, DnaK-independent fashion. Unfolded proteins bind initially to DnaJ; upon interaction with the DnaJ-bound protein, DnaK hydrolyzes its bound ATP, resulting in the formation of a stable complex. GrpE releases ADP from DnaK; ATP binding to DnaK triggers the release of the substrate protein, thus completing the reaction cycle. Several rounds of ATP-dependent interactions between DnaJ, DnaK and GrpE are required for fully efficient folding. Also involved, together with DnaK and GrpE, in the DNA replication of plasmids through activation of initiation proteins. In Acaryochloris marina (strain MBIC 11017), this protein is Chaperone protein DnaJ.